We begin with the raw amino-acid sequence, 464 residues long: Heterogeneous nuclear ribonucleoprotein K (464 aa).

Met1 bears the N-acetylmethionine mark. The disordered stretch occupies residues 1–37 (METEQPEETFPNTETNGEFGKRPAEDMEEEQAFKRSR). The necessary for interaction with DDX1 stretch occupies residues 1 to 276 (METEQPEETF…GRGGRPMPPS (276 aa)). A compositionally biased stretch (basic and acidic residues) spans 19 to 37 (FGKRPAEDMEEEQAFKRSR). Lys34 carries the N6-acetyllysine; alternate modification. Lys34 participates in a covalent cross-link: Glycyl lysine isopeptide (Lys-Gly) (interchain with G-Cter in SUMO1); alternate. Lys34 is covalently cross-linked (Glycyl lysine isopeptide (Lys-Gly) (interchain with G-Cter in SUMO2); alternate). A Phosphoserine modification is found at Ser36. Thr39 carries the phosphothreonine modification. One can recognise a KH 1 domain in the interval 42 to 104 (MVELRILLQS…ETIGEILKKI (63 aa)). Glycyl lysine isopeptide (Lys-Gly) (interchain with G-Cter in SUMO2) cross-links involve residues Lys52 and Lys60. A run of 2 repeats spans residues 54 to 76 (AGAV…NASV) and 59 to 62 (GKGG). A 2 X 22 AA approximate repeats region spans residues 54-421 (AGAVIGKGGK…QIRHESGASI (368 aa)). The tract at residues 59–407 (GKGGKNIKAL…LAGSIIGKGG (349 aa)) is 5 X 4 AA repeats of G-X-G-G. Residues Ser75 and Ser116 each carry the phosphoserine modification. The KH 2 domain occupies 144–209 (DCELRLLIHQ…DRVVECIKII (66 aa)). Residue Lys163 forms a Glycyl lysine isopeptide (Lys-Gly) (interchain with G-Cter in SUMO1); alternate linkage. Lys163 participates in a covalent cross-link: Glycyl lysine isopeptide (Lys-Gly) (interchain with G-Cter in SUMO2); alternate. An N6-acetyllysine modification is found at Lys198. Residues 209–337 (ILDLISESPI…RPGDRYDGMV (129 aa)) are interaction with ZIK1. A phosphoserine mark is found at Ser214 and Ser216. Lys219 is covalently cross-linked (Glycyl lysine isopeptide (Lys-Gly) (interchain with G-Cter in SUMO2); alternate). The residue at position 219 (Lys219) is an N6-succinyllysine; alternate. The segment at 236–273 (YGGFTMMFDDRRGRPVGFPMRGRGGFDRMPPGRGGRPM) is RNA-binding RGG-box. Repeat copies occupy residues 245–250 (DRRGRP), 257–260 (GRGG), and 267–270 (GRGG). The tract at residues 245–329 (DRRGRPVGFP…LMAYDRRGRP (85 aa)) is 2 X 6 AA approximate repeats. Positions 250–329 (PVGFPMRGRG…LMAYDRRGRP (80 aa)) are disordered. Positions 252–266 (GFPMRGRGGFDRMPP) are enriched in low complexity. Over residues 276-285 (SRRDYDDMSP) the composition is skewed to basic and acidic residues. Ser284 is subject to Phosphoserine. The stretch at 295–298 (GRGG) is one 3-4 repeat. Position 316 is an omega-N-methylarginine (Arg316). The 2-2 repeat unit spans residues 324 to 329 (DRRGRP). The residue at position 377 (Arg377) is an Omega-N-methylarginine. At Ser379 the chain carries Phosphoserine. Tyr380 is subject to Phosphotyrosine. The KH 3 domain occupies 387 to 451 (IITTQVTIPK…DQIQNAQYLL (65 aa)). A run of 2 repeats spans residues 399–421 (AGSI…GASI) and 404–407 (GKGG). Lys405 bears the N6-acetyllysine; alternate mark. Lys405 participates in a covalent cross-link: Glycyl lysine isopeptide (Lys-Gly) (interchain with G-Cter in SUMO2); alternate. Position 420 is a phosphoserine (Ser420). Residue Lys422 forms a Glycyl lysine isopeptide (Lys-Gly) (interchain with G-Cter in SUMO1); alternate linkage. Lys422 is covalently cross-linked (Glycyl lysine isopeptide (Lys-Gly) (interchain with G-Cter in SUMO2); alternate). Lys422 is covalently cross-linked (Glycyl lysine isopeptide (Lys-Gly) (interchain with G-Cter in SUMO); alternate).

As to quaternary structure, identified in the spliceosome C complex. Interacts with ANKRD28, RBM42 and ZIK1. Interacts with DDX1. Interacts with MDM2; this interaction leads to ubiquitination and proteasomal degradation. Interacts with p53/TP53. Interacts with BRDT. Interacts with IVNS1ABP. Interacts with PPIA/CYPA. Part of a transcription inhibitory ribonucleoprotein complex composed at least of the circular RNA circZNF827, ZNF827 and HNRNPL. Post-translationally, sumoylated by CBX4. Sumoylation is increased upon DNA damage, such as that produced by doxorubicin, etoposide, UV light and camptothecin, due to enhanced CBX4 phosphorylation by HIPK2 under these conditions. In terms of processing, ubiquitinated by MDM2. Doxorubicin treatment does not affect monoubiquitination, but slightly decreases HNRNPK poly-ubiquitination. O-glycosylated (O-GlcNAcylated), in a cell cycle-dependent manner.

It is found in the cytoplasm. The protein localises to the nucleus. The protein resides in the nucleoplasm. It localises to the cell projection. Its subcellular location is the podosome. In terms of biological role, one of the major pre-mRNA-binding proteins. Binds tenaciously to poly(C) sequences. Likely to play a role in the nuclear metabolism of hnRNAs, particularly for pre-mRNAs that contain cytidine-rich sequences. Can also bind poly(C) single-stranded DNA. Plays an important role in p53/TP53 response to DNA damage, acting at the level of both transcription activation and repression. When sumoylated, acts as a transcriptional coactivator of p53/TP53, playing a role in p21/CDKN1A and 14-3-3 sigma/SFN induction. As far as transcription repression is concerned, acts by interacting with long intergenic RNA p21 (lincRNA-p21), a non-coding RNA induced by p53/TP53. This interaction is necessary for the induction of apoptosis, but not cell cycle arrest. As part of a ribonucleoprotein complex composed at least of ZNF827, HNRNPL and the circular RNA circZNF827 that nucleates the complex on chromatin, may negatively regulate the transcription of genes involved in neuronal differentiation. This chain is Heterogeneous nuclear ribonucleoprotein K (HNRNPK), found in Bos taurus (Bovine).